The primary structure comprises 381 residues: Spindlin interactor and repressor of chromatin-binding protein (381 aa).

Lys49 participates in a covalent cross-link: Glycyl lysine isopeptide (Lys-Gly) (interchain with G-Cter in SUMO2). Residues Ser122 and Ser149 each carry the phosphoserine modification. Residues 148 to 158 (PSLPSLESGQD) show a composition bias toward polar residues. The tract at residues 148-170 (PSLPSLESGQDGQPDPISNPDPV) is disordered. Residues Lys190 and Lys221 each participate in a glycyl lysine isopeptide (Lys-Gly) (interchain with G-Cter in SUMO2) cross-link. Disordered regions lie at residues 203-270 (PVTP…TDGS), 285-320 (LRTT…LRGT), and 335-381 (AVSL…GSGV). Positions 219-229 (RWKESPENEPA) are enriched in basic and acidic residues. Phosphoserine is present on residues Ser249 and Ser252. The segment covering 288-299 (TDCKDSSKDSRA) has biased composition (basic and acidic residues). Glycyl lysine isopeptide (Lys-Gly) (interchain with G-Cter in SUMO2) cross-links involve residues Lys291 and Lys295. Residues 304–315 (PQPQNPSSASPP) are compositionally biased toward low complexity. 2 positions are modified to phosphoserine: Ser310 and Ser313.

Interacts with SPIN1, SPIN2A, SPIN2B, SPIN3 and SPIN4. Interacts with TCF7L2 in a SPIN1-dependent manner. Interacts with PARP1; promoting PARP1 ADP-ribosyltransferase activity.

The protein localises to the nucleus. The protein resides in the chromosome. In terms of biological role, chromatin protein that stabilizes SPIN1 and enhances its association with histone H3 trimethylated at both 'Lys-4' and 'Lys-9' (H3K4me3K9me3). Positively regulates poly-ADP-ribosylation in response to DNA damage; acts by facilitating PARP1 ADP-ribosyltransferase activity. In Mus musculus (Mouse), this protein is Spindlin interactor and repressor of chromatin-binding protein.